A 496-amino-acid chain; its full sequence is Protein nucleotidyltransferase YdiU (496 aa).

Residues G98, G100, R101, K116, D128, G129, R179, and R186 each coordinate ATP. The active-site Proton acceptor is D259. N260 and D269 together coordinate Mg(2+). An ATP-binding site is contributed by D269.

It belongs to the SELO family. Mg(2+) serves as cofactor. It depends on Mn(2+) as a cofactor.

It carries out the reaction L-seryl-[protein] + ATP = 3-O-(5'-adenylyl)-L-seryl-[protein] + diphosphate. The catalysed reaction is L-threonyl-[protein] + ATP = 3-O-(5'-adenylyl)-L-threonyl-[protein] + diphosphate. It catalyses the reaction L-tyrosyl-[protein] + ATP = O-(5'-adenylyl)-L-tyrosyl-[protein] + diphosphate. The enzyme catalyses L-histidyl-[protein] + UTP = N(tele)-(5'-uridylyl)-L-histidyl-[protein] + diphosphate. It carries out the reaction L-seryl-[protein] + UTP = O-(5'-uridylyl)-L-seryl-[protein] + diphosphate. The catalysed reaction is L-tyrosyl-[protein] + UTP = O-(5'-uridylyl)-L-tyrosyl-[protein] + diphosphate. Nucleotidyltransferase involved in the post-translational modification of proteins. It can catalyze the addition of adenosine monophosphate (AMP) or uridine monophosphate (UMP) to a protein, resulting in modifications known as AMPylation and UMPylation. This Albidiferax ferrireducens (strain ATCC BAA-621 / DSM 15236 / T118) (Rhodoferax ferrireducens) protein is Protein nucleotidyltransferase YdiU.